Here is a 206-residue protein sequence, read N- to C-terminus: Imidazoleglycerol-phosphate dehydratase (206 aa).

The protein belongs to the imidazoleglycerol-phosphate dehydratase family.

Its subcellular location is the cytoplasm. It carries out the reaction D-erythro-1-(imidazol-4-yl)glycerol 3-phosphate = 3-(imidazol-4-yl)-2-oxopropyl phosphate + H2O. It functions in the pathway amino-acid biosynthesis; L-histidine biosynthesis; L-histidine from 5-phospho-alpha-D-ribose 1-diphosphate: step 6/9. The polypeptide is Imidazoleglycerol-phosphate dehydratase (Leptospira interrogans serogroup Icterohaemorrhagiae serovar copenhageni (strain Fiocruz L1-130)).